A 660-amino-acid polypeptide reads, in one-letter code: Protein translocase subunit SecA 2 (660 aa).

ATP-binding positions include glutamine 113, 131–135 (GEGKT), and aspartate 539.

Belongs to the SecA family. Monomer and homodimer. Part of the essential Sec protein translocation apparatus which comprises SecA, SecYEG and auxiliary proteins SecDF-YajC and YidC.

The protein localises to the cell inner membrane. The protein resides in the cytoplasm. It carries out the reaction ATP + H2O + cellular proteinSide 1 = ADP + phosphate + cellular proteinSide 2.. Its function is as follows. Part of the Sec protein translocase complex. Interacts with the SecYEG preprotein conducting channel. Has a central role in coupling the hydrolysis of ATP to the transfer of proteins into and across the cell membrane, serving both as a receptor for the preprotein-SecB complex and as an ATP-driven molecular motor driving the stepwise translocation of polypeptide chains across the membrane. In Bordetella avium (strain 197N), this protein is Protein translocase subunit SecA 2.